Reading from the N-terminus, the 397-residue chain is Ribosomal RNA large subunit methyltransferase I (397 aa).

Residues 2 to 80 (SAAIYLVKGR…QDVNRAFFVK (79 aa)) form the PUA domain.

The protein belongs to the methyltransferase superfamily. RlmI family.

The protein resides in the cytoplasm. The catalysed reaction is cytidine(1962) in 23S rRNA + S-adenosyl-L-methionine = 5-methylcytidine(1962) in 23S rRNA + S-adenosyl-L-homocysteine + H(+). Functionally, specifically methylates the cytosine at position 1962 (m5C1962) of 23S rRNA. The sequence is that of Ribosomal RNA large subunit methyltransferase I from Vibrio vulnificus (strain YJ016).